The chain runs to 311 residues: 4-hydroxy-tetrahydrodipicolinate synthase (311 aa).

A pyruvate-binding site is contributed by Thr51. Tyr140 serves as the catalytic Proton donor/acceptor. Lys168 serves as the catalytic Schiff-base intermediate with substrate. Position 209 (Ile209) interacts with pyruvate.

This sequence belongs to the DapA family. As to quaternary structure, homotetramer; dimer of dimers.

It is found in the cytoplasm. The enzyme catalyses L-aspartate 4-semialdehyde + pyruvate = (2S,4S)-4-hydroxy-2,3,4,5-tetrahydrodipicolinate + H2O + H(+). The protein operates within amino-acid biosynthesis; L-lysine biosynthesis via DAP pathway; (S)-tetrahydrodipicolinate from L-aspartate: step 3/4. Functionally, catalyzes the condensation of (S)-aspartate-beta-semialdehyde [(S)-ASA] and pyruvate to 4-hydroxy-tetrahydrodipicolinate (HTPA). The protein is 4-hydroxy-tetrahydrodipicolinate synthase of Streptococcus pneumoniae (strain ATCC BAA-255 / R6).